The chain runs to 267 residues: MSRLATRFEQLKSQQRKALVSYVMAGDPQPQVSVPLLHKMVEAGVDVIELGLPFSDPMADGPVIALAAERALAAGTNTLDALNMVKEFRQNDSETPVVLMGYLNPVEVIGYEKFVSHAKACGVDGVLLVDLPPEEAKEFDVVLKQHDMDQIFLLAPTSTDQRIEHVVKQASGFIYYVSLKGVTGAATLDVTEAAERIAKIKTKTSVPVGVGFGISDAASAKAMGQVADAVIVGSAFVKPFATLAIDQAVEQTVNKVKELRAALDELV.

Active-site proton acceptor residues include Glu-49 and Asp-60.

Belongs to the TrpA family. In terms of assembly, tetramer of two alpha and two beta chains.

It carries out the reaction (1S,2R)-1-C-(indol-3-yl)glycerol 3-phosphate + L-serine = D-glyceraldehyde 3-phosphate + L-tryptophan + H2O. It functions in the pathway amino-acid biosynthesis; L-tryptophan biosynthesis; L-tryptophan from chorismate: step 5/5. In terms of biological role, the alpha subunit is responsible for the aldol cleavage of indoleglycerol phosphate to indole and glyceraldehyde 3-phosphate. The protein is Tryptophan synthase alpha chain of Acinetobacter baylyi (strain ATCC 33305 / BD413 / ADP1).